A 223-amino-acid chain; its full sequence is Cytidylate kinase (223 aa).

12 to 20 contacts ATP; that stretch reads GPSGVGKGT.

It belongs to the cytidylate kinase family. Type 1 subfamily.

The protein resides in the cytoplasm. It carries out the reaction CMP + ATP = CDP + ADP. It catalyses the reaction dCMP + ATP = dCDP + ADP. This Xylella fastidiosa (strain M23) protein is Cytidylate kinase.